The primary structure comprises 136 residues: Putative pre-16S rRNA nuclease (136 aa).

Belongs to the YqgF nuclease family.

It localises to the cytoplasm. Its function is as follows. Could be a nuclease involved in processing of the 5'-end of pre-16S rRNA. The chain is Putative pre-16S rRNA nuclease from Francisella tularensis subsp. tularensis (strain FSC 198).